A 271-amino-acid polypeptide reads, in one-letter code: Indole-3-glycerol phosphate synthase (271 aa).

The protein belongs to the TrpC family.

It carries out the reaction 1-(2-carboxyphenylamino)-1-deoxy-D-ribulose 5-phosphate + H(+) = (1S,2R)-1-C-(indol-3-yl)glycerol 3-phosphate + CO2 + H2O. It participates in amino-acid biosynthesis; L-tryptophan biosynthesis; L-tryptophan from chorismate: step 4/5. In Haloarcula marismortui (strain ATCC 43049 / DSM 3752 / JCM 8966 / VKM B-1809) (Halobacterium marismortui), this protein is Indole-3-glycerol phosphate synthase.